Consider the following 1109-residue polypeptide: Receptor-like protein kinase (1109 aa).

The first 20 residues, 1-20 (MKVAVNTFLLFLCSTSSIYA), serve as a signal peptide directing secretion. Over 21 to 764 (AFALNSDGAA…GGLSTLGIAM (744 aa)) the chain is Extracellular. 3 N-linked (GlcNAc...) asparagine glycosylation sites follow: N50, N74, and N114. LRR repeat units lie at residues 69-92 (FVDT…SHLK), 93-115 (HLKK…LGNC), 117-140 (LLEH…GALQ), 141-162 (NLRN…SLLS), 165-187 (HLET…IGNM), and 189-209 (ELTT…SSLG). N-linked (GlcNAc...) asparagine glycans are attached at residues N144, N177, and N186. N210 is a glycosylation site (N-linked (GlcNAc...) asparagine). LRR repeat units follow at residues 213 to 236 (TLQE…NNLE), 237 to 258 (NLVY…DFVS), 261 to 284 (QIDT…GNCT), 309 to 331 (KLDT…LGKC), 333 to 355 (SMID…LGML), 357 to 378 (QLQY…SIWK), 381 to 404 (SLQS…TELK), 405 to 427 (QLVS…LGAN), 429 to 451 (SLEV…LCSQ), 453 to 476 (KLKR…GGCS), 477 to 499 (TLER…VEKQ), 500 to 523 (NLLF…GNLK), 524 to 546 (NVTA…LGSL), 548 to 569 (KLEH…ELSN), 572 to 595 (KLSE…GSLT), 596 to 618 (ELTK…LFQS), 620 to 642 (KLLN…GALQ), 643 to 666 (ALRS…GKLK), 667 to 689 (MLEE…STIQ), and 690 to 710 (SLTF…PSLT). N245 and N282 each carry an N-linked (GlcNAc...) asparagine glycan. N367, N391, and N427 each carry an N-linked (GlcNAc...) asparagine glycan. 4 N-linked (GlcNAc...) asparagine glycosylation sites follow: N510, N524, N553, and N584. N-linked (GlcNAc...) asparagine glycosylation is found at N648, N677, and N695. The chain crosses the membrane as a helical span at residues 765-785 (IVLGALLFIICLFLFSAFLFL). The Cytoplasmic portion of the chain corresponds to 786-1109 (HCKKSVQEIA…YSSSVRNKSK (324 aa)). The 281-residue stretch at 816 to 1096 (LNDKYVIGKG…DVVKQLTRWS (281 aa)) folds into the Protein kinase domain. ATP-binding positions include 822–830 (IGKGAHGTI) and K845. Residues 827–850 (HGTIYKATLSPDKVYAVKKLVFTG) form an LRR 27 repeat. D942 serves as the catalytic Proton acceptor. An LRR 28 repeat occupies 958-981 (ISDFGIAKLLDQSATSIPSNTVQG).

It belongs to the protein kinase superfamily. Ser/Thr protein kinase family. INRPK1 and INRPK1b are expressed in leaves, cotyledons, shoot tips and roots from induced and vegetative plants. The highest concentrations of INRPK1 are found in vegetative roots, and the lowest concentrations in vegetative cotyledons. INRPK1b is more abundant in roots than other tissues. INRPK1a is expressed in vegetative roots. INRPK1c is expressed in cotyledons.

The protein resides in the cell membrane. The protein localises to the secreted. It catalyses the reaction L-seryl-[protein] + ATP = O-phospho-L-seryl-[protein] + ADP + H(+). The enzyme catalyses L-threonyl-[protein] + ATP = O-phospho-L-threonyl-[protein] + ADP + H(+). In terms of biological role, possible role in short-day photoperiod floral induction. This Ipomoea nil (Japanese morning glory) protein is Receptor-like protein kinase (INRPK1).